The chain runs to 413 residues: E3 ubiquitin-protein ligase makorin (413 aa).

2 C3H1-type zinc fingers span residues 2–29 and 30–57; these read PRHE…HDVA and TRNE…HTRP. The tract at residues 61-85 is disordered; that stretch reads ELPSCSTPQTSQNQQNLQNSGQRVR. A compositionally biased stretch (low complexity) spans 66–82; sequence STPQTSQNQQNLQNSGQ. A C3H1-type 3 zinc finger spans residues 138–167; it reads QAQLMMCPYHQKSGDCNRQDMDCPFAHGNY. The RING-type zinc-finger motif lies at 213–267; it reads CGICMENIFEKNLRFGILNGCQHCFCLDCIRQWRSKDQENVELATKTVRSCPECR. The C3H1-type 4 zinc-finger motif lies at 296 to 327; it reads NTKRKICKYYSNERSRGACPFGNKCFYKHQLP.

In terms of assembly, component of a complex at least containing lep-2, lin-28 and the long non-coding RNA lep-5, which mediates the degradation of lin-28. As to expression, expressed in seam, tail tip, and other hypodermal cells, head and tail neurons, the pharynx, intestine and the developing hermaphrodite somatic gonad. Not expressed in body wall muscle cells.

The protein localises to the cytoplasm. It carries out the reaction S-ubiquitinyl-[E2 ubiquitin-conjugating enzyme]-L-cysteine + [acceptor protein]-L-lysine = [E2 ubiquitin-conjugating enzyme]-L-cysteine + N(6)-ubiquitinyl-[acceptor protein]-L-lysine.. It participates in protein modification; protein ubiquitination. Functionally, E3 ubiquitin ligase which catalyzes the covalent attachment of ubiquitin moieties onto substrate proteins. Promotes the larval to adult transition by binding to the long non-coding RNA lep-5 to target the heterochronic protein lin-28 for degradation by the proteasome. This association and degradation of lin-28 also controls the timing of the sexual differentiation of individual neurons in males including the AIM, AWA, ADF, ASJ and CEM neurons. Plays a role in governing the developmental timing of male tail tip morphogenesis. Plays a role in two aspects of male mating behavior: response to hermaphrodite contact and vulva location. May play a role in the detection of preferred food sources. This is E3 ubiquitin-protein ligase makorin from Caenorhabditis elegans.